Reading from the N-terminus, the 86-residue chain is MANSKQAKKRAGQSEKRRQHNASRRSMMRTLVKKVLAAIEAGDKEVATKELAAATPTLDRYASKGLIHKNKAARSKSRLNAAIKAL.

Residues 1-27 (MANSKQAKKRAGQSEKRRQHNASRRSM) are disordered.

Belongs to the bacterial ribosomal protein bS20 family.

Its function is as follows. Binds directly to 16S ribosomal RNA. This is Small ribosomal subunit protein bS20 from Colwellia psychrerythraea (strain 34H / ATCC BAA-681) (Vibrio psychroerythus).